The chain runs to 256 residues: Probable histidine-binding protein (256 aa).

The N-terminal stretch at 1 to 19 is a signal peptide; it reads MKKFLTAFLVAFTGLFLVA. The N-palmitoyl cysteine moiety is linked to residue cysteine 20. Cysteine 20 is lipidated: S-diacylglycerol cysteine.

The protein belongs to the bacterial solute-binding protein 3 family.

It localises to the cell membrane. Functionally, involved in histidine transport. The sequence is that of Probable histidine-binding protein (hisJ) from Campylobacter jejuni subsp. jejuni serotype O:2 (strain ATCC 700819 / NCTC 11168).